A 126-amino-acid chain; its full sequence is Glycine cleavage system H protein (126 aa).

Positions 22–104 constitute a Lipoyl-binding domain; it reads KAYIGITSFA…YEQAWMIVVE (83 aa). The residue at position 63 (K63) is an N6-lipoyllysine.

This sequence belongs to the GcvH family. In terms of assembly, the glycine cleavage system is composed of four proteins: P, T, L and H. (R)-lipoate serves as cofactor.

In terms of biological role, the glycine cleavage system catalyzes the degradation of glycine. The H protein shuttles the methylamine group of glycine from the P protein to the T protein. Functionally, is also involved in protein lipoylation via its role as an octanoyl/lipoyl carrier protein intermediate. The sequence is that of Glycine cleavage system H protein from Brevibacillus brevis (strain 47 / JCM 6285 / NBRC 100599).